The sequence spans 250 residues: Ribosomal RNA small subunit methyltransferase J (250 aa).

S-adenosyl-L-methionine-binding positions include 96–97 and aspartate 168; that span reads RD.

It belongs to the methyltransferase superfamily. RsmJ family.

Its subcellular location is the cytoplasm. It carries out the reaction guanosine(1516) in 16S rRNA + S-adenosyl-L-methionine = N(2)-methylguanosine(1516) in 16S rRNA + S-adenosyl-L-homocysteine + H(+). Its function is as follows. Specifically methylates the guanosine in position 1516 of 16S rRNA. The sequence is that of Ribosomal RNA small subunit methyltransferase J from Neisseria gonorrhoeae (strain NCCP11945).